The sequence spans 492 residues: N-succinylglutamate 5-semialdehyde dehydrogenase (492 aa).

220–225 lines the NAD(+) pocket; the sequence is GSANTG. Residues Glu243 and Cys277 contribute to the active site.

This sequence belongs to the aldehyde dehydrogenase family. AstD subfamily.

It catalyses the reaction N-succinyl-L-glutamate 5-semialdehyde + NAD(+) + H2O = N-succinyl-L-glutamate + NADH + 2 H(+). Its pathway is amino-acid degradation; L-arginine degradation via AST pathway; L-glutamate and succinate from L-arginine: step 4/5. In terms of biological role, catalyzes the NAD-dependent reduction of succinylglutamate semialdehyde into succinylglutamate. This is N-succinylglutamate 5-semialdehyde dehydrogenase from Escherichia coli O7:K1 (strain IAI39 / ExPEC).